A 423-amino-acid chain; its full sequence is FAD-dependent monooxygenase asL6 (423 aa).

FAD-binding positions include 10–13, 34–35, Arg108, Tyr290, and Asp312; these read AGVA and ER. A helical membrane pass occupies residues 371 to 391; it reads GMGMFQSKFGVGVFYVLLAII.

This sequence belongs to the aromatic-ring hydroxylase family. FAD serves as cofactor.

It localises to the membrane. The protein operates within secondary metabolite biosynthesis; terpenoid biosynthesis. In terms of biological role, FAD-dependent monooxygenase; part of the gene cluster that mediates the biosynthesis of xenovulene A, an unusual meroterpenoid that has potent inhibitory effects on the human gamma-aminobutyrate A (GABAA) benzodiazepine receptor. The first step of xenovulene A biosynthesis is the biosynthesis of 3-methylorcinaldehyde performed by the non-reducing polyketide synthase aspks1. The salicylate hydroxylase asL1 then catalyzes the oxidative dearomatization of 3-methylorcinaldehyde to yield a dearomatized hydroxycyclohexadione. The 2-oxoglutarate-dependent dioxygenase asL3 further catalyzes the oxidative ring expansion to provide the first tropolone metabolite. The cytochrome P450 monooxygenase asR2 allows the synthesis of tropolone hemiacetal. In parallel, a previously unrecognised class of terpene cyclase, asR6, produces alpha-humulene from farnesylpyrophosphate (FPP). The putative Diels-Alderase asR5 probably catalyzes the formation of the tropolone-humulene skeleton by linking humulene and the polyketide moiety. Oxidative-ring contractions catalyzed by asL4 and asL6 then processively remove carbon atoms from the polyketide to yield xenovulene A. The sequence is that of FAD-dependent monooxygenase asL6 from Sarocladium schorii (Acremonium strictum (strain IMI 501407)).